The sequence spans 292 residues: Tricin synthase 2 (292 aa).

Positions 21–46 (RTTPASRVSSTAMAAANGDASHGANG) are disordered. Polar residues predominate over residues 23–32 (TPASRVSSTA). Residues S108, E130, 132-133 (GV), S138, D156, and A185 each bind S-adenosyl-L-methionine. D208 contributes to the a divalent metal cation binding site. D210 contributes to the S-adenosyl-L-methionine binding site. A divalent metal cation is bound by residues D234 and N235.

This sequence belongs to the class I-like SAM-binding methyltransferase superfamily. Cation-dependent O-methyltransferase family. CCoAMT subfamily. Mg(2+) is required as a cofactor. The cofactor is Mn(2+). As to expression, expressed in stems only.

The catalysed reaction is tricetin + 2 S-adenosyl-L-methionine = 3',5'-di-O-methyltricetin + 2 S-adenosyl-L-homocysteine + 2 H(+). Catalyzes the stepwise methylation of tricetin to its 3'-mono- and 3',5'-dimethyl ethers. No 3',4',5'-trimethylated ester derivatives are produced. Can use caffeoyl CoA, 5-hydroxyferulic acid, luteolin, tricetin, quercetin, myrcetin and 7,8-dihydroxyflavone as substrates, but not naringenin, apigenin or kaempferol. The 2,3-double bond and the O-dihydroxyl group of the substrate are both required for catalytic activity of the enzyme. In Oryza sativa subsp. japonica (Rice), this protein is Tricin synthase 2 (ROMT-17).